We begin with the raw amino-acid sequence, 430 residues long: UDP-N-acetylglucosamine 1-carboxyvinyltransferase (430 aa).

Residue 22 to 23 (KN) coordinates phosphoenolpyruvate. Arg-102 is a UDP-N-acetyl-alpha-D-glucosamine binding site. Cys-126 functions as the Proton donor in the catalytic mechanism. Cys-126 bears the 2-(S-cysteinyl)pyruvic acid O-phosphothioketal mark. UDP-N-acetyl-alpha-D-glucosamine-binding positions include 131–135 (RPVDL), 172–175 (KVSV), Asp-317, and Ile-339.

This sequence belongs to the EPSP synthase family. MurA subfamily.

Its subcellular location is the cytoplasm. It catalyses the reaction phosphoenolpyruvate + UDP-N-acetyl-alpha-D-glucosamine = UDP-N-acetyl-3-O-(1-carboxyvinyl)-alpha-D-glucosamine + phosphate. It functions in the pathway cell wall biogenesis; peptidoglycan biosynthesis. In terms of biological role, cell wall formation. Adds enolpyruvyl to UDP-N-acetylglucosamine. In Rhizobium etli (strain CIAT 652), this protein is UDP-N-acetylglucosamine 1-carboxyvinyltransferase.